A 293-amino-acid polypeptide reads, in one-letter code: Small ribosomal subunit biogenesis GTPase RsgA (293 aa).

The region spanning 63–223 (KNELVRPPIA…VADTPGFSSL (161 aa)) is the CP-type G domain. GTP is bound by residues 112–115 (SKMD) and 166–174 (GQSGVGKSS). Positions 247, 252, 254, and 260 each coordinate Zn(2+).

This sequence belongs to the TRAFAC class YlqF/YawG GTPase family. RsgA subfamily. Monomer. Associates with 30S ribosomal subunit, binds 16S rRNA. It depends on Zn(2+) as a cofactor.

The protein resides in the cytoplasm. One of several proteins that assist in the late maturation steps of the functional core of the 30S ribosomal subunit. Helps release RbfA from mature subunits. May play a role in the assembly of ribosomal proteins into the subunit. Circularly permuted GTPase that catalyzes slow GTP hydrolysis, GTPase activity is stimulated by the 30S ribosomal subunit. This is Small ribosomal subunit biogenesis GTPase RsgA from Bacillus cereus (strain ATCC 14579 / DSM 31 / CCUG 7414 / JCM 2152 / NBRC 15305 / NCIMB 9373 / NCTC 2599 / NRRL B-3711).